Consider the following 261-residue polypeptide: Cytochrome c oxidase subunit 3 (261 aa).

The Mitochondrial matrix segment spans residues 1-15; it reads MTHQTHAYHMVNPSP. Residues 16–34 traverse the membrane as a helical segment; the sequence is WPLTGALSALLMTSGLAMW. Over 35 to 40 the chain is Mitochondrial intermembrane; sequence FHFNST. The chain crosses the membrane as a helical span at residues 41-66; it reads LLLALGLLTNILTMYQWWRDIIREST. Over 67–72 the chain is Mitochondrial matrix; that stretch reads FQGHHT. Residues 73 to 105 traverse the membrane as a helical segment; it reads SIVQKGLRYGMILFIISEVFFFSGFFWAFYHSS. The Mitochondrial intermembrane segment spans residues 106-128; it reads LAPTPELGGCWPPTGIHPLNPLE. A helical transmembrane segment spans residues 129–152; that stretch reads VPLLNTSVLLASGVSITWAHHSLM. Topologically, residues 153 to 155 are mitochondrial matrix; the sequence is EGN. Residues 156-183 traverse the membrane as a helical segment; the sequence is RKNMLQGLFITISLGVYFTLLQASEYYE. The Mitochondrial intermembrane segment spans residues 184–190; it reads ASFTISD. A helical transmembrane segment spans residues 191–223; the sequence is GVYGSTFFVATGFHGLHVIIGSTFLIVCFLRQL. Over 224-232 the chain is Mitochondrial matrix; sequence KFHFTSSHH. A helical membrane pass occupies residues 233–256; that stretch reads FGFEAAAWYWHFVDVVWLFLYVSI. At 257 to 261 the chain is on the mitochondrial intermembrane side; the sequence is YWWGS.

This sequence belongs to the cytochrome c oxidase subunit 3 family. Component of the cytochrome c oxidase (complex IV, CIV), a multisubunit enzyme composed of 14 subunits. The complex is composed of a catalytic core of 3 subunits MT-CO1, MT-CO2 and MT-CO3, encoded in the mitochondrial DNA, and 11 supernumerary subunits COX4I, COX5A, COX5B, COX6A, COX6B, COX6C, COX7A, COX7B, COX7C, COX8 and NDUFA4, which are encoded in the nuclear genome. The complex exists as a monomer or a dimer and forms supercomplexes (SCs) in the inner mitochondrial membrane with NADH-ubiquinone oxidoreductase (complex I, CI) and ubiquinol-cytochrome c oxidoreductase (cytochrome b-c1 complex, complex III, CIII), resulting in different assemblies (supercomplex SCI(1)III(2)IV(1) and megacomplex MCI(2)III(2)IV(2)).

It is found in the mitochondrion inner membrane. The catalysed reaction is 4 Fe(II)-[cytochrome c] + O2 + 8 H(+)(in) = 4 Fe(III)-[cytochrome c] + 2 H2O + 4 H(+)(out). Component of the cytochrome c oxidase, the last enzyme in the mitochondrial electron transport chain which drives oxidative phosphorylation. The respiratory chain contains 3 multisubunit complexes succinate dehydrogenase (complex II, CII), ubiquinol-cytochrome c oxidoreductase (cytochrome b-c1 complex, complex III, CIII) and cytochrome c oxidase (complex IV, CIV), that cooperate to transfer electrons derived from NADH and succinate to molecular oxygen, creating an electrochemical gradient over the inner membrane that drives transmembrane transport and the ATP synthase. Cytochrome c oxidase is the component of the respiratory chain that catalyzes the reduction of oxygen to water. Electrons originating from reduced cytochrome c in the intermembrane space (IMS) are transferred via the dinuclear copper A center (CU(A)) of subunit 2 and heme A of subunit 1 to the active site in subunit 1, a binuclear center (BNC) formed by heme A3 and copper B (CU(B)). The BNC reduces molecular oxygen to 2 water molecules using 4 electrons from cytochrome c in the IMS and 4 protons from the mitochondrial matrix. This is Cytochrome c oxidase subunit 3 (MT-CO3) from Equus asinus (Donkey).